The chain runs to 359 residues: Tryptophan 2,3-dioxygenase (359 aa).

Residues 38–42 (FIIVH) and R109 each bind substrate. Residue H295 participates in heme binding. T309 is a binding site for substrate.

This sequence belongs to the tryptophan 2,3-dioxygenase family. Homotetramer. The cofactor is heme.

It carries out the reaction L-tryptophan + O2 = N-formyl-L-kynurenine. Its pathway is amino-acid degradation; L-tryptophan degradation via kynurenine pathway; L-kynurenine from L-tryptophan: step 1/2. Its function is as follows. Heme-dependent dioxygenase that catalyzes the oxidative cleavage of the L-tryptophan (L-Trp) pyrrole ring and converts L-tryptophan to N-formyl-L-kynurenine. Catalyzes the oxidative cleavage of the indole moiety. The chain is Tryptophan 2,3-dioxygenase from Bdellovibrio bacteriovorus (strain ATCC 15356 / DSM 50701 / NCIMB 9529 / HD100).